Consider the following 410-residue polypeptide: Lipoyl synthase, mitochondrial (410 aa).

[4Fe-4S] cluster contacts are provided by Cys134, Cys139, Cys145, Cys165, Cys169, Cys172, and Ser390. Positions 148–379 constitute a Radical SAM core domain; sequence AGKSTAATAT…AKIGNDLGFL (232 aa).

It belongs to the radical SAM superfamily. Lipoyl synthase family. Requires [4Fe-4S] cluster as cofactor.

Its subcellular location is the mitochondrion. It carries out the reaction [[Fe-S] cluster scaffold protein carrying a second [4Fe-4S](2+) cluster] + N(6)-octanoyl-L-lysyl-[protein] + 2 oxidized [2Fe-2S]-[ferredoxin] + 2 S-adenosyl-L-methionine + 4 H(+) = [[Fe-S] cluster scaffold protein] + N(6)-[(R)-dihydrolipoyl]-L-lysyl-[protein] + 4 Fe(3+) + 2 hydrogen sulfide + 2 5'-deoxyadenosine + 2 L-methionine + 2 reduced [2Fe-2S]-[ferredoxin]. It functions in the pathway protein modification; protein lipoylation via endogenous pathway; protein N(6)-(lipoyl)lysine from octanoyl-[acyl-carrier-protein]: step 2/2. Functionally, catalyzes the radical-mediated insertion of two sulfur atoms into the C-6 and C-8 positions of the octanoyl moiety bound to the lipoyl domains of lipoate-dependent enzymes, thereby converting the octanoylated domains into lipoylated derivatives. The sequence is that of Lipoyl synthase, mitochondrial from Schistosoma mansoni (Blood fluke).